The sequence spans 880 residues: MEISSSPWNDGGYSPYERNRVAVSPFSSALEGEERIETSRSLGDHCFEPLPYVTNYLSIFALFGKEIFGDKGNVSSRNEYLLKKYYSLKKPFVLRHNGHALKNPDMPLQRNDILQTNFMVDKFLNRTVRSVNFNNFKIISDMQSKSGRGTKSGTNQNQSADAIQNICLPSIPSALPYFQYYRKLLTVNTKEWDILKLHSLWVPKLRKDFKDFSLYGDKNSLKPIDSHYDEDNTMKKNLFFERSPSRQTLDGKGCASKGYDISSGNMIIPSLFSEDKLPALTYHCSVELNGNIYIFGGLMPCYSYEEDAPMLNDFFVDGIKNLPPPLLPQVINNPSMVNNPHLYVASIPSCRFSKPKMGGYIPPPLLCVQGSKLTDRHIFFYGGFEIRTETRGDENGKYHLKKRLYVNNTGYILDIMSFKFTKIDIIVQPSKYNAYPTMSSRFGHLQISIDNPNRRASVHSSSMNEIHKMGSASMKQGSSITSGRLEKAAVLSSLPHNTVHTVIIFGGYRQTGDDRYEAMNDLWKIEIPVIRRGKKGYCKFSETANAILLTPSEKDKSDWPEERAFSAFSVHGTSLMDRSSLDMRLLNNLKNHFVLKPSYISQDRVVSPKPVFPMMVHGTHQDLFNSGSAAQESPKAGASASSASAASFDPDMDDNLENYIVNPGRKSSSIPMTAIGRQRLILSQEKPVGKTVVLHGGSNGLNVLDDMWLMDLECETWTPIETFAKADSSEDGDEKLDSVNVGLVGHRMESIGRICVCIGGMVQEDVDQFYSENDDEPPRKRKVDTLPLGGNFLNTIDLSTQCWEEHKITLSKKEDDEDRQDSENEDTNSNIVVGVGGTSLQCDKSIILIGGLISRRSNVKEIYLHGTITKSIFPSVNPSA.

Serine 24 carries the phosphoserine modification. Kelch repeat units lie at residues 291-339 (NIYI…MVNN), 377-425 (HIFF…KIDI), and 501-552 (TVII…LTPS). The interval 624-649 (FNSGSAAQESPKAGASASSASAASFD) is disordered. A compositionally biased stretch (low complexity) spans 638-647 (ASASSASAAS). One copy of the Kelch 4 repeat lies at 691-738 (TVVLHGGSNGLNVLDDMWLMDLECETWTPIETFAKADSSEDGDEKLDS).

In terms of assembly, g proteins are composed of 3 units, alpha, beta and gamma. GPB1 interacts with the alpha subunit GPA2.

It is found in the cytoplasm. Its subcellular location is the mitochondrion. Its function is as follows. Beta subunit of a guanine nucleotide-binding protein (G protein). G proteins are involved as modulators or transducers in various transmembrane signaling systems. The beta and gamma chains are required for the GTPase activity, for replacement of GDP by GTP, and for G protein-effector interaction. Involved in the determination of the cAMP level according to nutritional conditions, most probably as a regulator of cAMP phosphodiesterase. Required for the control of pseudohyphal and haploid invasive growth. In Saccharomyces cerevisiae (strain ATCC 204508 / S288c) (Baker's yeast), this protein is Guanine nucleotide-binding protein subunit beta 2 (GPB2).